A 119-amino-acid chain; its full sequence is Holo-[acyl-carrier-protein] synthase (119 aa).

Mg(2+) contacts are provided by aspartate 8 and glutamate 58.

It belongs to the P-Pant transferase superfamily. AcpS family. The cofactor is Mg(2+).

The protein resides in the cytoplasm. The catalysed reaction is apo-[ACP] + CoA = holo-[ACP] + adenosine 3',5'-bisphosphate + H(+). Functionally, transfers the 4'-phosphopantetheine moiety from coenzyme A to a Ser of acyl-carrier-protein. This is Holo-[acyl-carrier-protein] synthase from Bacillus cereus (strain B4264).